A 732-amino-acid polypeptide reads, in one-letter code: Catalase-peroxidase (732 aa).

The segment at residues 96 to 219 (WHSAGTYRIG…LGAVQMGLIY (124 aa)) is a cross-link (tryptophyl-tyrosyl-methioninium (Trp-Tyr) (with M-245)). Catalysis depends on histidine 97, which acts as the Proton acceptor. Residues 219-245 (YVNPEGPNGHPDPVASGRDIRETFGRM) constitute a cross-link (tryptophyl-tyrosyl-methioninium (Tyr-Met) (with W-96)). Histidine 260 is a binding site for heme b.

The protein belongs to the peroxidase family. Peroxidase/catalase subfamily. Homodimer or homotetramer. It depends on heme b as a cofactor. In terms of processing, formation of the three residue Trp-Tyr-Met cross-link is important for the catalase, but not the peroxidase activity of the enzyme.

The catalysed reaction is H2O2 + AH2 = A + 2 H2O. It catalyses the reaction 2 H2O2 = O2 + 2 H2O. Functionally, bifunctional enzyme with both catalase and broad-spectrum peroxidase activity. In Acaryochloris marina (strain MBIC 11017), this protein is Catalase-peroxidase.